Reading from the N-terminus, the 274-residue chain is 2,3,4,5-tetrahydropyridine-2,6-dicarboxylate N-succinyltransferase (274 aa).

2 residues coordinate substrate: Arg-106 and Asp-143.

This sequence belongs to the transferase hexapeptide repeat family. As to quaternary structure, homotrimer.

The protein localises to the cytoplasm. It catalyses the reaction (S)-2,3,4,5-tetrahydrodipicolinate + succinyl-CoA + H2O = (S)-2-succinylamino-6-oxoheptanedioate + CoA. It functions in the pathway amino-acid biosynthesis; L-lysine biosynthesis via DAP pathway; LL-2,6-diaminopimelate from (S)-tetrahydrodipicolinate (succinylase route): step 1/3. In Rickettsia rickettsii (strain Sheila Smith), this protein is 2,3,4,5-tetrahydropyridine-2,6-dicarboxylate N-succinyltransferase.